The sequence spans 426 residues: MLKEPSVRLREAIIEGNLLIVKRLLRRNPDLLTNIDSENGWSSLHYASYHGRYLICVYLIQLGHDKHELIKTFKGNTCVHLALMKGHEQTLHLLLQQFPRFINHRGENGRAPIHIACMNDYYQCLSLLIGVGADLWVMDTNGDTPLHVCLEYGSISCMKMLLNEGEVSLDDNVRDKGNWKPIDVAQTFEVGNIYSKVLKEVKKKGPPLGAGKKPSSFRTPILNAKATFEDGPSPVLSMNSPYSLYSNNSPLPVLPRRISTHTTSGNGGNRRSSITNPVFNPRKPTLSTDSFSSSSNSSSRLRVNSINVKTPVGVSPKKELVSESVRHSATPTSPHNNIALINRYLLPNKSNDNVRGDSQTATINDDGGGGNGGDATIGMGLRKDPDDENENKYKIKVNNGEPRRRVSLLNIPISKLRNSNNTRAED.

ANK repeat units lie at residues 4 to 33, 39 to 68, 74 to 104, 108 to 137, and 141 to 171; these read EPSVRLREAIIEGNLLIVKRLLRRNPDLLT, NGWSSLHYASYHGRYLICVYLIQLGHDKHE, KGNTCVHLALMKGHEQTLHLLLQQFPRFINH, NGRAPIHIACMNDYYQCLSLLIGVGADLWV, and NGDTPLHVCLEYGSISCMKMLLNEGEVSLDD. Residues 259–302 are disordered; that stretch reads STHTTSGNGGNRRSSITNPVFNPRKPTLSTDSFSSSSNSSSRLR. Residues 260 to 278 are compositionally biased toward polar residues; sequence THTTSGNGGNRRSSITNPV. Positions 285–302 are enriched in low complexity; it reads TLSTDSFSSSSNSSSRLR. Residues Ser315 and Ser350 each carry the phosphoserine modification. Residues 350–359 show a composition bias toward polar residues; that stretch reads SNDNVRGDSQ. Residues 350–392 are disordered; that stretch reads SNDNVRGDSQTATINDDGGGGNGGDATIGMGLRKDPDDENENK. Residues 366 to 375 are compositionally biased toward gly residues; that stretch reads DGGGGNGGDA. The segment covering 381–392 has biased composition (basic and acidic residues); sequence LRKDPDDENENK.

In terms of assembly, the target of rapamycin complex 2 (TORC2) is composed of at least AVO1, AVO2, BIT61, LST8, TOR2 and TSC11. TORC2 forms a homodimer. Contrary to TORC1, TORC2 does not bind to and is not sensitive to FKBP-rapamycin. AVO2 is peripherally associated to AVO1 and TSC11.

It is found in the cell membrane. Its subcellular location is the vacuole membrane. Its function is as follows. Component of TORC2, which regulates cell cycle-dependent polarization of the actin-cytoskeleton and cell wall integrity. TORC2 controls polarity of the actin cytoskeleton, which is required for orienting the secretory pathway toward discrete growth sites, via the RHO1/PKC1/MAPK cell integrity pathway. The polypeptide is Target of rapamycin complex 2 subunit AVO2 (AVO2) (Saccharomyces cerevisiae (strain ATCC 204508 / S288c) (Baker's yeast)).